Reading from the N-terminus, the 478-residue chain is MADPIMHLQVVILSLILHLADSVADSVNVDGVAGLSITLPCRYNGAITSMCWNRGTCSVFSCPDGIVWTNGTHVTYRKETRYKLLGNLSRRDVSLTIANTAVSDSGIYCCRVKHSGWFNDMKITISLKIGPPRVTIPIVRTVRTSTTVPTTTTTTLPTTTTLPTTTTLPTTMTLPTTTTLPMTTTLPTTTTVPMTTTLPTTLPTTTTLPTTLPTTTTLPTTLPTTTTLPTTMTLPMTTTLPTTTTLPTTTTLPTTTTLPTTTTLPTTTLPTMTLPTTTTLPTTMTLPMTTTLPTTTTLPTTTTLPTTTMVSTFVPPTPLPMQDHEPVATSPSSAQPAETHPVTLLGATRTQPTSSPLYSYTTDGSDTVTESSDGLWNNNQTQLSPEHSPQMVNTTEGIYAGVCISVLVLLAVLGVVIAKKYFFKKEIQQLSVSFSNHQFKTLQNAVKKEVHAEDNIYIENNLYAMNQDPVVLFESLRP.

A signal peptide spans 1–24; the sequence is MADPIMHLQVVILSLILHLADSVA. Residues 25 to 126 enclose the Ig-like V-type domain; sequence DSVNVDGVAG…WFNDMKITIS (102 aa). Topologically, residues 25 to 397 are extracellular; that stretch reads DSVNVDGVAG…SPQMVNTTEG (373 aa). Intrachain disulfides connect Cys-41–Cys-110, Cys-51–Cys-62, and Cys-57–Cys-109. Residues Asn-70 and Asn-87 are each glycosylated (N-linked (GlcNAc...) asparagine). 28 tandem repeats follow at residues 148–155, 156–161, 162–167, 168–173, 174–179, 180–185, 186–191, 192–197, 198–201, 202–207, 208–211, 212–217, 218–221, 222–227, 228–233, 234–239, 240–245, 246–251, 252–257, 258–263, 264–268, 269–273, 274–279, 280–285, 286–291, 292–297, 298–303, and 304–309. Residues 148–309 are 28 X 6 AA approximate tandem repeats of L-P-[MT]-T-[MT]-T; sequence VPTTTTTTLP…TTTTLPTTTM (162 aa). The segment at 187 to 303 is disordered; the sequence is PTTTTVPMTT…TTTTLPTTTT (117 aa). Disordered stretches follow at residues 320–339 and 344–370; these read PMQDHEPVATSPSSAQPAET and LLGATRTQPTSSPLYSYTTDGSDTVTE. A compositionally biased stretch (polar residues) spans 348-370; that stretch reads TRTQPTSSPLYSYTTDGSDTVTE. N-linked (GlcNAc...) asparagine glycans are attached at residues Asn-379 and Asn-393. The chain crosses the membrane as a helical span at residues 398–418; sequence IYAGVCISVLVLLAVLGVVIA. Residues 419–478 are Cytoplasmic-facing; that stretch reads KKYFFKKEIQQLSVSFSNHQFKTLQNAVKKEVHAEDNIYIENNLYAMNQDPVVLFESLRP.

It belongs to the immunoglobulin superfamily. TIM family. Interacts with STAM. Interacts with SELPLG.

It is found in the cell membrane. Phosphatidylserine receptor that plays an important functional role in regulatory B-cells homeostasis including generation, expansion and suppressor functions. As P-selectin/SELPLG ligand, plays a specialized role in activated but not naive T-cell trafficking during inflammatory responses. Controls thereby T-cell accumulation in the inflamed central nervous system (CNS) and the induction of autoimmune disease. Also regulates expression of various anti-inflammatory cytokines and co-inhibitory ligands including IL10. Acts as a regulator of T-cell proliferation. May play a role in kidney injury and repair. This is Hepatitis A virus cellular receptor 1 (HAVCR1) from Chlorocebus aethiops (Green monkey).